We begin with the raw amino-acid sequence, 341 residues long: Glyceraldehyde-3-phosphate dehydrogenase 2 (341 aa).

NAD(+) contacts are provided by residues 13–14 (RI), Asp-35, and Arg-85. Residues 157–159 (SCT), Thr-188, 217–218 (TG), and Arg-240 each bind D-glyceraldehyde 3-phosphate. Residue Cys-158 is the Nucleophile of the active site. Asn-322 is an NAD(+) binding site.

It belongs to the glyceraldehyde-3-phosphate dehydrogenase family. Homotetramer.

It is found in the cytoplasm. The enzyme catalyses D-glyceraldehyde 3-phosphate + phosphate + NAD(+) = (2R)-3-phospho-glyceroyl phosphate + NADH + H(+). It participates in carbohydrate degradation; glycolysis; pyruvate from D-glyceraldehyde 3-phosphate: step 1/5. This is Glyceraldehyde-3-phosphate dehydrogenase 2 (gpd-2) from Caenorhabditis elegans.